The following is a 652-amino-acid chain: Nitrate reductase-like protein NarX (652 aa).

The nitrate reductase alpha subunit stretch occupies residues 1-251 (MTVTPRTGSR…FGDQTDVPES (251 aa)). Positions 53-117 (DKVVRSTHGV…AFSWYTYSPT (65 aa)) constitute a 4Fe-4S Mo/W bis-MGD-type domain. Residues His60, Cys64, Cys68, and Cys103 each coordinate [4Fe-4S] cluster. Asp233 provides a ligand contact to Mo-bis(molybdopterin guanine dinucleotide). A nitrate reductase delta subunit region spans residues 258 to 415 (VWQCASVLLT…TVAAVCRTGD (158 aa)). The next 5 membrane-spanning stretches (helical) occupy residues 416–436 (MMGE…VAVG), 466–486 (PMFH…LVIP), 504–524 (AVVL…LLIY), 545–565 (LVLV…SGVV), and 595–615 (APLY…LWPF). Positions 416-652 (MMGELFWTVV…VLTRPRRRGW (237 aa)) are nitrate reductase gamma subunit. Heme b contacts are provided by His469 and His479. His602 and His620 together coordinate heme b.

The protein in the N-terminal section; belongs to the nitrate reductase alpha subunit family. In the central section; belongs to the NarJ/NarW family. It in the C-terminal section; belongs to the nitrate reductase gamma subunit family. It depends on [4Fe-4S] cluster as a cofactor. The cofactor is Mo-bis(molybdopterin guanine dinucleotide). Heme b serves as cofactor.

The protein localises to the cell membrane. Does not seem to have nitrate reductase activity. This Mycobacterium tuberculosis (strain CDC 1551 / Oshkosh) protein is Nitrate reductase-like protein NarX (narX).